We begin with the raw amino-acid sequence, 188 residues long: Elongation factor P (188 aa).

It belongs to the elongation factor P family.

It localises to the cytoplasm. Its pathway is protein biosynthesis; polypeptide chain elongation. Involved in peptide bond synthesis. Stimulates efficient translation and peptide-bond synthesis on native or reconstituted 70S ribosomes in vitro. Probably functions indirectly by altering the affinity of the ribosome for aminoacyl-tRNA, thus increasing their reactivity as acceptors for peptidyl transferase. The polypeptide is Elongation factor P (Mycoplasmoides gallisepticum (strain R(low / passage 15 / clone 2)) (Mycoplasma gallisepticum)).